A 283-amino-acid chain; its full sequence is Shikimate dehydrogenase (NADP(+)) (283 aa).

Shikimate is bound by residues 16 to 18 (SLS) and Thr63. Lys67 acts as the Proton acceptor in catalysis. Asp79 is a binding site for NADP(+). Shikimate is bound by residues Asn88 and Asp103. NADP(+) contacts are provided by residues 128–132 (GAGGA), Ala223, and Gly243.

The protein belongs to the shikimate dehydrogenase family. In terms of assembly, homodimer.

The catalysed reaction is shikimate + NADP(+) = 3-dehydroshikimate + NADPH + H(+). The protein operates within metabolic intermediate biosynthesis; chorismate biosynthesis; chorismate from D-erythrose 4-phosphate and phosphoenolpyruvate: step 4/7. Functionally, involved in the biosynthesis of the chorismate, which leads to the biosynthesis of aromatic amino acids. Catalyzes the reversible NADPH linked reduction of 3-dehydroshikimate (DHSA) to yield shikimate (SA). The polypeptide is Shikimate dehydrogenase (NADP(+)) (Xanthomonas oryzae pv. oryzae (strain MAFF 311018)).